The primary structure comprises 305 residues: Glycine--tRNA ligase alpha subunit (305 aa).

The protein belongs to the class-II aminoacyl-tRNA synthetase family. Tetramer of two alpha and two beta subunits.

It is found in the cytoplasm. The enzyme catalyses tRNA(Gly) + glycine + ATP = glycyl-tRNA(Gly) + AMP + diphosphate. This is Glycine--tRNA ligase alpha subunit from Streptococcus pneumoniae serotype 19F (strain G54).